The chain runs to 386 residues: Aspergillopepsin-1 (386 aa).

Positions Met-1–Ala-20 are cleaved as a signal peptide. The propeptide at Met-21 to Met-69 is activation peptide. The region spanning Tyr-85 to Ala-383 is the Peptidase A1 domain. Asp-101 is an active-site residue. N-linked (GlcNAc...) asparagine glycosylation occurs at Asn-130. The active site involves Asp-275. Cys-311 and Cys-346 are oxidised to a cystine.

The protein belongs to the peptidase A1 family. As to quaternary structure, monomer.

It localises to the secreted. The enzyme catalyses Hydrolysis of proteins with broad specificity. Generally favors hydrophobic residues in P1 and P1', but also accepts Lys in P1, which leads to activation of trypsinogen. Does not clot milk.. Its function is as follows. Secreted aspartic endopeptidase that allows assimilation of proteinaceous substrates. The scissile peptide bond is attacked by a nucleophilic water molecule activated by two aspartic residues in the active site. Shows a broad primary substrate specificity. Favors hydrophobic residues at the P1 and P1' positions, but also accepts a lysine residue in the P1 position, leading to the activation of trypsinogen and chymotrypsinogen A. This chain is Aspergillopepsin-1, found in Emericella nidulans (strain FGSC A4 / ATCC 38163 / CBS 112.46 / NRRL 194 / M139) (Aspergillus nidulans).